The chain runs to 424 residues: ATP-sensitive inward rectifier potassium channel 8 (424 aa).

Residues 1–69 (MLARKSIIPE…IFTTLVDLKW (69 aa)) are Cytoplasmic-facing. Position 6 is a phosphoserine (serine 6). A helical membrane pass occupies residues 70 to 94 (RHTLVIFTMSFLCSWLLFAIMWWLV). Over 95–126 (AFAHGDIYAYMEKGITEKSGLESAVCVTNVRS) the chain is Extracellular. The segment at residues 127–138 (FTSAFLFSIEVQ) is an intramembrane region (helical; Pore-forming). The segment at residues 139-145 (VTIGFGG) is an intramembrane region (pore-forming). The short motif at 140-145 (TIGFGG) is the Selectivity filter element. Topologically, residues 146–154 (RMMTEECPL) are extracellular. A helical transmembrane segment spans residues 155-176 (AITVLILQNIVGLIINAVMLGC). Over 177–424 (IFMKTAQAHR…PEGNQCPSES (248 aa)) the chain is Cytoplasmic. A disordered region spans residues 374–424 (LSHQNSLRKRNSMRRNNSMRRSNSIRRNNSSLMVPKVQFMTPEGNQCPSES). The span at 387–404 (RRNNSMRRSNSIRRNNSS) shows a compositional bias: low complexity.

The protein belongs to the inward rectifier-type potassium channel (TC 1.A.2.1) family. KCNJ8 subfamily. In terms of assembly, interacts with ABCC9. As to expression, widely expressed, including in pancreatic islets, pituitary, skeletal muscle and heart.

It is found in the membrane. It catalyses the reaction K(+)(in) = K(+)(out). Functionally, inward rectifier potassium channels are characterized by a greater tendency to allow potassium to flow into the cell rather than out of it. Their voltage dependence is regulated by the concentration of extracellular potassium; as external potassium is raised, the voltage range of the channel opening shifts to more positive voltages. The inward rectification is mainly due to the blockage of outward current by internal magnesium. This channel is activated by internal ATP and can be blocked by external barium. Can form a sulfonyllurea-sensitive but ATP-insensitive potassium channel with ABCC9. The polypeptide is ATP-sensitive inward rectifier potassium channel 8 (Kcnj8) (Rattus norvegicus (Rat)).